We begin with the raw amino-acid sequence, 276 residues long: Homeobox-leucine zipper protein HOX11 (276 aa).

Positions 1–92 (MVDGHLEAST…DDGGSARKKL (92 aa)) are disordered. Polar residues predominate over residues 39–48 (LSSSPNNSAG). The segment covering 58-73 (HGLGGNDAAPGGGGGD) has biased composition (gly residues). The homeobox DNA-binding region spans 87–146 (SARKKLRLSKEQSAFLEESFKEHSTLNPKQKLALAKQLNLRPRQVEVWFQNRRARTKLKQ). Positions 145-189 (KQTEVDCEYLKRCCETLTEENRRLQKELAELRALKTVHPFYMHLP) are leucine-zipper. The disordered stretch occupies residues 214 to 244 (AATSSTAAPPAAPSSGGIAATSSSSAAAAAA).

This sequence belongs to the HD-ZIP homeobox family. Class II subfamily. As to expression, expressed in stems, leaf sheaths and blades and panicles.

It localises to the nucleus. Probable transcription factor. The polypeptide is Homeobox-leucine zipper protein HOX11 (HOX11) (Oryza sativa subsp. indica (Rice)).